A 379-amino-acid polypeptide reads, in one-letter code: F-box protein At1g30200 (379 aa).

One can recognise an F-box domain in the interval 24 to 72 (DHFDLLPDSLLLLIFDKVADVKDLGRCCIVSRRFHSLVPFVENVLVRVD).

The chain is F-box protein At1g30200 from Arabidopsis thaliana (Mouse-ear cress).